We begin with the raw amino-acid sequence, 372 residues long: MKNNAKEDYRTFSLTTNYSRQMIYRCVTGLQIGFSLFSFIIVCVALPIMYNHVQNTITYVDREMAYCEVRFLYFYCIKFFSTLQRSNDEAALELQYGKMRMTGNRTARGAYGSGASHGFRPTAYGDEITGAPLETECPGCCIPGPPGPRGSSGTPGKPGLPGNAGKPGMPGTTPNQTCPLNQVREPPPCRPCPKGPPGIKGWPGFPGDVGPPGPPGLKGIDGEDGAPGETGPTGPPGYRGGPGAPGDKGPTPEGDLKEGPPGDEGPPGPIGAPGMPGLPGRNGLTGGQGERGWPGVSGESGEPGYPGPEGPMGGQGPPGEPGVCVCQNVDSILLINPGPQPRIRADDYNSDDGYGGSRGGGDRAGYQGYGRK.

The first 45 residues, 1–45 (MKNNAKEDYRTFSLTTNYSRQMIYRCVTGLQIGFSLFSFIIVCVA), serve as a signal peptide directing secretion. 3 triple-helical region regions span residues 144-173 (GPPG…PGTT), 195-251 (GPPG…KGPT), and 259-324 (GPPG…PGVC). The segment at 144 to 372 (GPPGPRGSSG…RAGYQGYGRK (229 aa)) is disordered. The span at 185 to 196 (EPPPCRPCPKGP) shows a compositional bias: pro residues. A compositionally biased stretch (low complexity) spans 197–208 (PGIKGWPGFPGD). Composition is skewed to gly residues over residues 237-246 (GYRGGPGAPG) and 283-292 (GLTGGQGERG). The span at 293–303 (WPGVSGESGEP) shows a compositional bias: low complexity. A compositionally biased stretch (gly residues) spans 353 to 363 (GYGGSRGGGDR).

The protein belongs to the cuticular collagen family. In terms of assembly, collagen polypeptide chains are complexed within the cuticle by disulfide bonds and other types of covalent cross-links.

Nematode cuticles are composed largely of collagen-like proteins. The cuticle functions both as an exoskeleton and as a barrier to protect the worm from its environment. This chain is Cuticle collagen dpy-10 (dpy-10), found in Caenorhabditis elegans.